A 353-amino-acid polypeptide reads, in one-letter code: Survival factor 2 (353 aa).

It belongs to the SVF1 family.

The protein localises to the cytoplasm. It localises to the nucleus. The sequence is that of Survival factor 2 (svf2) from Schizosaccharomyces pombe (strain 972 / ATCC 24843) (Fission yeast).